The chain runs to 78 residues: MSSNSNTDHSTGDNRSKSEKQTDLRNALRETESHGMPPLRGPAGFPVNPRPFSHGGNANLDRLNLKEPVDLEGPKDEQ.

The tract at residues 1 to 78 (MSSNSNTDHS…VDLEGPKDEQ (78 aa)) is disordered. Composition is skewed to basic and acidic residues over residues 10–33 (STGDNRSKSEKQTDLRNALRETES) and 63–78 (LNLKEPVDLEGPKDEQ).

This is an uncharacterized protein from Schizosaccharomyces pombe (strain 972 / ATCC 24843) (Fission yeast).